Reading from the N-terminus, the 326-residue chain is Vomeronasal type-1 receptor 94 (326 aa).

Topologically, residues 1–32 (MSEILLFSPQPLFSYTMNKYSRLYTNSNIRNT) are extracellular. A helical membrane pass occupies residues 33–53 (FFSEIGIGIAANSLLLLFHIF). Residues 54–65 (KFIRGQRSRLTD) lie on the Cytoplasmic side of the membrane. The helical transmembrane segment at 66-86 (LPIGLLSLIHLLKLLMIAFIA) threads the bilayer. At 87-110 (TDIFISWRGWDDIICKFLVYLYRS) the chain is on the extracellular side. An intrachain disulfide couples C101 to C188. A helical transmembrane segment spans residues 111–130 (FRGLSLCTTCMLSVLQAITL). The Cytoplasmic segment spans residues 131 to 150 (SPRSSCLAKFKHKSPHHVSC). Residues 151-171 (AILSLSVLYMFISSHLLVSLI) traverse the membrane as a helical segment. At 172–203 (ATPNLTTNVFMYVSESCSILPMSYLMQSMFST) the chain is on the extracellular side. N175 carries N-linked (GlcNAc...) asparagine glycosylation. A helical transmembrane segment spans residues 204–224 (LLAIRDVFLISLMVLSTCYMV). Topologically, residues 225 to 254 (ALLCRHRKQTRHLQGTSLSPKASPEKKATH) are cytoplasmic. A helical membrane pass occupies residues 255 to 275 (SILMLMSFFVLMSILDSIVSC). Residues 276–285 (SRTMFLYDPT) are Extracellular-facing. The chain crosses the membrane as a helical span at residues 286 to 306 (SYAIQIFVSHIYATVSPFVFM). The Cytoplasmic segment spans residues 307 to 326 (SNEKHIVNFLRSLCKRVINV).

It belongs to the G-protein coupled receptor 1 family.

The protein localises to the cell membrane. Putative pheromone receptor implicated in the regulation of social as well as reproductive behavior. The protein is Vomeronasal type-1 receptor 94 (Vom1r94) of Rattus norvegicus (Rat).